An 86-amino-acid polypeptide reads, in one-letter code: Bacteriocin thailandicin (86 aa).

The cyclopeptide (Leu-Trp) cross-link spans leucine 23–tryptophan 86.

Its subcellular location is the secreted. Functionally, cyclopeptide antibiotic with bacteriolytic activity against the Gram-positive bacteria S.aureus and S.thermophilus, and lower activity against the Gram-negative bacteria E.coli and P.aeruginosa. This is Bacteriocin thailandicin from Enterococcus thailandicus.